Consider the following 303-residue polypeptide: Cytochrome c oxidase subunit 2 (303 aa).

The first 25 residues, 1–25, serve as a signal peptide directing secretion; that stretch reads MRHSTTLTGCATGAAGLLAATAAAA. A run of 2 helical transmembrane segments spans residues 60 to 80 and 104 to 124; these read FILV…LYAV and WTIV…PVLF. Cu cation-binding residues include His217, Cys252, Cys256, and His260.

This sequence belongs to the cytochrome c oxidase subunit 2 family. It depends on Cu cation as a cofactor.

It localises to the cell membrane. The catalysed reaction is 4 Fe(II)-[cytochrome c] + O2 + 8 H(+)(in) = 4 Fe(III)-[cytochrome c] + 2 H2O + 4 H(+)(out). Functionally, subunits I and II form the functional core of the enzyme complex. Electrons originating in cytochrome c are transferred via heme a and Cu(A) to the binuclear center formed by heme a3 and Cu(B). The protein is Cytochrome c oxidase subunit 2 (ctaC) of Cereibacter sphaeroides (Rhodobacter sphaeroides).